The following is a 404-amino-acid chain: 2,3-diketo-5-methylthiopentyl-1-phosphate enolase (404 aa).

The active-site Proton acceptor is Lys-91. Substrate-binding positions include Lys-140, 166-169, His-257, Gly-329, and 351-352; these read KDDE and GG. 3 residues coordinate Mg(2+): Lys-166, Asp-168, and Glu-169. Lys-166 carries the post-translational modification N6-carboxylysine.

The protein belongs to the RuBisCO large chain family. Type IV subfamily. In terms of assembly, homodimer. The cofactor is Mg(2+).

The enzyme catalyses 5-methylsulfanyl-2,3-dioxopentyl phosphate = 2-hydroxy-5-methylsulfanyl-3-oxopent-1-enyl phosphate. The protein operates within amino-acid biosynthesis; L-methionine biosynthesis via salvage pathway; L-methionine from S-methyl-5-thio-alpha-D-ribose 1-phosphate: step 3/6. Functionally, catalyzes the enolization of 2,3-diketo-5-methylthiopentyl-1-phosphate (DK-MTP-1-P) into 2-hydroxy-3-keto-5-methylthiopentenyl-1-phosphate (HK-MTPenyl-1-P). This Bacillus velezensis (strain DSM 23117 / BGSC 10A6 / LMG 26770 / FZB42) (Bacillus amyloliquefaciens subsp. plantarum) protein is 2,3-diketo-5-methylthiopentyl-1-phosphate enolase.